The chain runs to 82 residues: Immediate early response 3-interacting protein 1 (82 aa).

Helical transmembrane passes span 2 to 22 (AFTL…IAVL) and 62 to 82 (VMRV…LLFG).

The protein belongs to the YOS1 family.

The protein resides in the endoplasmic reticulum membrane. Regulator of endoplasmic reticulum secretion that acts as a key determinant of brain size. Required for secretion of extracellular matrix proteins. Required for correct brain development by depositing sufficient extracellular matrix proteins for tissue integrity and the proliferation of neural progenitors. Acts as a regulator of the unfolded protein response (UPR). This is Immediate early response 3-interacting protein 1 from Bos taurus (Bovine).